The following is a 1299-amino-acid chain: MLDVNFFDELRIGLATADDIRQWSHGEVKKPETINYRTLKPEKDGLFCEKIFGPTRDWECYCGKYKRVRFKGIICERCGVEVTRAKVRRERMGHIELAAPVTHIWYFKGVPSRLGYLLDLAPKDLEKVIYFAAYMITYVDDERRTRDLPSLEAHVSVERQQIENRRDSDLEARAKKLETDLAELEAEGAKADVRRKVREGAEREMKQLRDRAQREIDRLDEVWTRFKNLKVQDLEGDELLYRELRDRFGTYFDGSMGAAALQKRLESFDLDEEAERLREIIRTGKGQKKTRALKRLKVVSAFLQTSNSPKGMVLDCVPVIPPDLRPMVQLDGGRFATSDLNDLYRRVINRNNRLKRLLDLGAPEIIVNNEKRMLQEAVDALFDNGRRGRPVTGPGNRPLKSLSDMLKGKQGRFRQNLLGKRVDYSARSVIVVGPQLKLHQCGLPKAMALELFKPFVMKRLVDLNHAQNIKSAKRMVERGRTVVYDVLEEVIAEHPVLLNRAPTLHRLGIQAFEPQLVEGKAIQIHPLVCTAFNADFDGDQMAVHLPLSAEAQAEARILMLSSNNILKPADGRPVTMPTQDMVLGLFFLTTDGALRNVKGEERSFASVAEAIMAFDAGELSLQSRVDIRFPVGTIPPRGWTPPAREEGEPEWQQGDTFRLRTTLGRALFNELLPEDYPFVDYEVGKKQLSEIVNDLAERYPKVIVAATLDNLKAAGFYWATRSGVTVAISDIVVPEAKKEIVKGYEAQDEKVQKQYERGLITKDERTQELIAIWTKATNEVAEAMNANFPKTNPIFMMVDSGARGNMMQMRQIAGMRGLVSNAKNETIPRPIKASFREGLSVLEYFISTHGARKGLADTALRTADSGYLTRRLVDVSQDVIIREEDCGTERGLKLKIAERGADGVLRKTDDVETSVYARMLAEDVVIDGKVIAPANVDLGDVLIDQLVHHGVEEVKTRSILTCESQVGTCAMCYGRSLATGKLVDIGEAVGIIAAQSIGEPGTQLTMRTFHTGGVAGDDITQGLPRVVELFEARTPKGVAPISEASGRVRIEETEKTKKIVVTPDDGSDETAFPISKRARVLVTEGEHVEVGQKLTVGATNPHDVLRILGQRAVQVHLVGEVQKVYNSQGVSIHDKHIEIIIRQMLRRVTIIESGDAELLPGELVERSKFETENRRVVQEGGHPASGRPQLMGITKASLATESWLSAASFQETTRVLTDAAINAKSDSLIGLKENVIIGKLIPAGTGLSRYRNIRVEPTEEAKAAMYSAVGYDDIDYSPFGTGSGQAVPLEDYDYGPYNQ.

Residues Cys60, Cys62, Cys75, and Cys78 each contribute to the Zn(2+) site. The disordered stretch occupies residues 385 to 405 (GRRGRPVTGPGNRPLKSLSDM). 3 residues coordinate Mg(2+): Asp535, Asp537, and Asp539. Zn(2+) contacts are provided by Cys886, Cys962, Cys969, and Cys972.

The protein belongs to the RNA polymerase beta' chain family. The RNAP catalytic core consists of 2 alpha, 1 beta, 1 beta' and 1 omega subunit. When a sigma factor is associated with the core the holoenzyme is formed, which can initiate transcription. The cofactor is Mg(2+). Zn(2+) serves as cofactor.

It carries out the reaction RNA(n) + a ribonucleoside 5'-triphosphate = RNA(n+1) + diphosphate. DNA-dependent RNA polymerase catalyzes the transcription of DNA into RNA using the four ribonucleoside triphosphates as substrates. This Streptomyces avermitilis (strain ATCC 31267 / DSM 46492 / JCM 5070 / NBRC 14893 / NCIMB 12804 / NRRL 8165 / MA-4680) protein is DNA-directed RNA polymerase subunit beta'.